A 137-amino-acid polypeptide reads, in one-letter code: Ribonuclease VapC3 (137 aa).

Positions 12–129 constitute a PINc domain; that stretch reads VVVDASAMVD…LTTDERLARA (118 aa). The Mg(2+) site is built by aspartate 15 and aspartate 105.

The protein belongs to the PINc/VapC protein family. Mg(2+) is required as a cofactor.

In terms of biological role, toxic component of a type II toxin-antitoxin (TA) system. An RNase. Its toxic effect is neutralized by coexpression with cognate antitoxin VapB3. In Mycobacterium tuberculosis (strain CDC 1551 / Oshkosh), this protein is Ribonuclease VapC3.